The primary structure comprises 354 residues: MAPQNKVTTSGKDNNMDKQKALEAALAQIDRAFGKGSVMRLGSREKIEIDTISSGSLGLDIALGIGGLPRGRIVEIYGPESSGKTTLALHAIAEAQKAGGTAAFVDAEHALDPVYAKKLGVNTDDLIVSQPDTGEQALEITDTLIRSNAVDILVVDSVAALTPRAEIEGEMGDSHVGLQARLMSQALRKITGSINRSQTLVIFINQVRMKIGVMYGNPETTTGGNALKFYASVRLDIRRVGQIKDRDEIVGNATRVKVVKNKLAPPFKQVEFDIMYGEGVSKMGEILDLGVKAGIIDKSGSWFSHDSVRIGQGRENAKTFLREHPEMTEKIEKMIRHNTAEIADEMLDPSIPED.

An ATP-binding site is contributed by 78-85 (GPESSGKT).

It belongs to the RecA family.

The protein localises to the cytoplasm. Its function is as follows. Can catalyze the hydrolysis of ATP in the presence of single-stranded DNA, the ATP-dependent uptake of single-stranded DNA by duplex DNA, and the ATP-dependent hybridization of homologous single-stranded DNAs. It interacts with LexA causing its activation and leading to its autocatalytic cleavage. This Zymomonas mobilis subsp. mobilis (strain ATCC 31821 / ZM4 / CP4) protein is Protein RecA.